Consider the following 262-residue polypeptide: Thiazole synthase (262 aa).

Lys-96 serves as the catalytic Schiff-base intermediate with DXP. Residues Gly-157, 184–185, and 206–207 contribute to the 1-deoxy-D-xylulose 5-phosphate site; these read AG and NT.

This sequence belongs to the ThiG family. In terms of assembly, homotetramer. Forms heterodimers with either ThiH or ThiS.

Its subcellular location is the cytoplasm. The catalysed reaction is [ThiS sulfur-carrier protein]-C-terminal-Gly-aminoethanethioate + 2-iminoacetate + 1-deoxy-D-xylulose 5-phosphate = [ThiS sulfur-carrier protein]-C-terminal Gly-Gly + 2-[(2R,5Z)-2-carboxy-4-methylthiazol-5(2H)-ylidene]ethyl phosphate + 2 H2O + H(+). The protein operates within cofactor biosynthesis; thiamine diphosphate biosynthesis. Catalyzes the rearrangement of 1-deoxy-D-xylulose 5-phosphate (DXP) to produce the thiazole phosphate moiety of thiamine. Sulfur is provided by the thiocarboxylate moiety of the carrier protein ThiS. In vitro, sulfur can be provided by H(2)S. The chain is Thiazole synthase from Legionella pneumophila (strain Paris).